Here is a 514-residue protein sequence, read N- to C-terminus: DNA-(apurinic or apyrimidinic site) endonuclease 2 (514 aa).

2 residues coordinate Mg(2+): N8 and E48. Y156 is a catalytic residue. Positions 197, 199, 303, and 304 each coordinate Mg(2+). The active-site Proton donor/acceptor is D197. H304 serves as the catalytic Proton acceptor. The tract at residues 359-417 (PSNQTQVHMRKNKARVRSTRSRPSKTGSSRGQKNLMSYFQPSSSGPQTSNLDLPSLGTL) is disordered. Positions 366 to 381 (HMRKNKARVRSTRSRP) are enriched in basic residues. Residue K371 forms a Glycyl lysine isopeptide (Lys-Gly) (interchain with G-Cter in ubiquitin) linkage. Polar residues predominate over residues 382–410 (SKTGSSRGQKNLMSYFQPSSSGPQTSNLD). Positions 390 to 397 (QKNLMSYF) are required for the interaction and colocalization with PCNA in nuclear foci in presence of oxidative-induced DNA damaging agents. Zn(2+)-binding residues include C465, H468, C491, and C505. The GRF-type zinc-finger motif lies at 465 to 514 (CGGHREPCVMRTVKKPGPNLGRHFYMCARPQGPPTDPSSRCNFFLWSRPS).

This sequence belongs to the DNA repair enzymes AP/ExoA family. As to quaternary structure, interacts with PCNA; this interaction is triggered by reactive oxygen species and increased by misincorporation of uracil in nuclear DNA. Mg(2+) is required as a cofactor. Requires Mn(2+) as cofactor. In terms of processing, ubiquitinated by the CUL9-RBX1 complex. Ubiquitinated by MKRN3 at Lys-371 leading to proteasomal degradation.

The protein localises to the nucleus. The protein resides in the cytoplasm. It is found in the mitochondrion. It catalyses the reaction Exonucleolytic cleavage in the 3'- to 5'-direction to yield nucleoside 5'-phosphates.. With respect to regulation, 3'-5' exonuclease activity is activated by sodium and manganese. 3'-5' exonuclease and 3'-phosphodiesterase activities are stimulated in presence of PCNA. Its function is as follows. Functions as a weak apurinic/apyrimidinic (AP) endodeoxyribonuclease in the DNA base excision repair (BER) pathway of DNA lesions induced by oxidative and alkylating agents. Initiates repair of AP sites in DNA by catalyzing hydrolytic incision of the phosphodiester backbone immediately adjacent to the damage, generating a single-strand break with 5'-deoxyribose phosphate and 3'-hydroxyl ends. Also displays double-stranded DNA 3'-5' exonuclease, 3'-phosphodiesterase activities. Shows robust 3'-5' exonuclease activity on 3'-recessed heteroduplex DNA and is able to remove mismatched nucleotides preferentially. Shows fairly strong 3'-phosphodiesterase activity involved in the removal of 3'-damaged termini formed in DNA by oxidative agents. In the nucleus functions in the PCNA-dependent BER pathway. Plays a role in reversing blocked 3' DNA ends, problematic lesions that preclude DNA synthesis. Required for somatic hypermutation (SHM) and DNA cleavage step of class switch recombination (CSR) of immunoglobulin genes. Required for proper cell cycle progression during proliferation of peripheral lymphocytes. In Bos taurus (Bovine), this protein is DNA-(apurinic or apyrimidinic site) endonuclease 2 (APEX2).